Reading from the N-terminus, the 197-residue chain is Molybdenum cofactor guanylyltransferase (197 aa).

GTP-binding positions include 12 to 14, lysine 25, asparagine 53, aspartate 71, and aspartate 101; that span reads LAG. Residue aspartate 101 participates in Mg(2+) binding.

Belongs to the MobA family. As to quaternary structure, monomer. The cofactor is Mg(2+).

The protein resides in the cytoplasm. The catalysed reaction is Mo-molybdopterin + GTP + H(+) = Mo-molybdopterin guanine dinucleotide + diphosphate. In terms of biological role, transfers a GMP moiety from GTP to Mo-molybdopterin (Mo-MPT) cofactor (Moco or molybdenum cofactor) to form Mo-molybdopterin guanine dinucleotide (Mo-MGD) cofactor. In Bordetella pertussis (strain Tohama I / ATCC BAA-589 / NCTC 13251), this protein is Molybdenum cofactor guanylyltransferase.